Consider the following 174-residue polypeptide: Chorismate pyruvate-lyase (174 aa).

Substrate is bound by residues Met36, Arg78, Leu116, and Glu157.

The protein belongs to the UbiC family. Monomer.

The protein resides in the cytoplasm. It carries out the reaction chorismate = 4-hydroxybenzoate + pyruvate. It functions in the pathway cofactor biosynthesis; ubiquinone biosynthesis. Removes the pyruvyl group from chorismate, with concomitant aromatization of the ring, to provide 4-hydroxybenzoate (4HB) for the ubiquinone pathway. In Yersinia pestis bv. Antiqua (strain Angola), this protein is Chorismate pyruvate-lyase.